A 342-amino-acid chain; its full sequence is Large ribosomal subunit protein uL3 (342 aa).

The segment at 1–22 is disordered; sequence MGHRKLSSPRRGSAGLRPRKRA.

It belongs to the universal ribosomal protein uL3 family. Part of the 50S ribosomal subunit. Forms a cluster with proteins L14 and L24e.

One of the primary rRNA binding proteins, it binds directly near the 3'-end of the 23S rRNA, where it nucleates assembly of the 50S subunit. The protein is Large ribosomal subunit protein uL3 of Sulfolobus acidocaldarius (strain ATCC 33909 / DSM 639 / JCM 8929 / NBRC 15157 / NCIMB 11770).